Consider the following 95-residue polypeptide: DNA-directed RNA polymerase subunit Rpo11 (95 aa).

The protein belongs to the archaeal Rpo11/eukaryotic RPB11/RPC19 RNA polymerase subunit family. As to quaternary structure, part of the RNA polymerase complex.

It localises to the cytoplasm. It catalyses the reaction RNA(n) + a ribonucleoside 5'-triphosphate = RNA(n+1) + diphosphate. Functionally, DNA-dependent RNA polymerase (RNAP) catalyzes the transcription of DNA into RNA using the four ribonucleoside triphosphates as substrates. The sequence is that of DNA-directed RNA polymerase subunit Rpo11 from Pyrococcus abyssi (strain GE5 / Orsay).